A 210-amino-acid chain; its full sequence is Synaptosomal-associated protein 23 (210 aa).

N-acetylmethionine is present on Met1. Phosphoserine is present on residues Ser5, Ser20, Ser23, and Ser34. Residues 14-76 enclose the t-SNARE coiled-coil homology 1 domain; the sequence is HQVTDESLES…REAEKTLTEL (63 aa). Positions 23-76 form a coiled coil; it reads STRRILGLAIESQDAGIKTITMLDEQGEQLNRIEEGMDQINKDMREAEKTLTEL. S-palmitoyl cysteine attachment occurs at residues Cys79, Cys80, Cys83, Cys85, and Cys87. Positions 104 to 135 are disordered; it reads GDGGDNSPSNVVSKQPSRITNGQPQQTTGAAS. Residues 109 to 133 are compositionally biased toward polar residues; it reads NSPSNVVSKQPSRITNGQPQQTTGA. Ser110 and Ser160 each carry phosphoserine. The 63-residue stretch at 145 to 207 folds into the t-SNARE coiled-coil homology 2 domain; sequence DAREDEMEEN…DIANTRAKKL (63 aa).

Belongs to the SNAP-25 family. In terms of assembly, homotetramer (via coiled-coil domain), also forms heterotetramers with STX4 and VAMP3. Found in a complex with VAMP8 and STX1A. Found in a complex with VAMP8 and STX4 in pancreas. Interacts simultaneously with SNAPIN and SYN4. Interacts with STX1A. Interacts with STX12. Interacts tightly to multiple syntaxins and synaptobrevins/VAMPs. Interacts with ZDHHC13 (via ANK repeats). Interacts with ZDHHC17 (via ANK repeats). (Microbial infection) Targeted and hydrolyzed by C.botulinum neurotoxin type A (BoNT/A, botA) which hydrolyzes the 202-Thr-|-Arg-203 bond; the in vitro reaction is not highly efficient. Post-translationally, (Microbial infection) Targeted and hydrolyzed by C.botulinum neurotoxin type E (BoNT/E) which hydrolyzes the 185-Arg-|-Ile-186 bond; the in vitro reaction is more efficient than that of BoNT/A. In terms of tissue distribution, expressed in non-neuronal tissues.

The protein resides in the cell membrane. The protein localises to the synapse. It is found in the synaptosome. In terms of biological role, essential component of the high affinity receptor for the general membrane fusion machinery and an important regulator of transport vesicle docking and fusion. The sequence is that of Synaptosomal-associated protein 23 (Snap23) from Mus musculus (Mouse).